A 156-amino-acid polypeptide reads, in one-letter code: Arginine repressor (156 aa).

It belongs to the ArgR family.

It localises to the cytoplasm. It functions in the pathway amino-acid biosynthesis; L-arginine biosynthesis [regulation]. Functionally, regulates arginine biosynthesis genes. This Erwinia tasmaniensis (strain DSM 17950 / CFBP 7177 / CIP 109463 / NCPPB 4357 / Et1/99) protein is Arginine repressor.